The sequence spans 319 residues: 4-diphosphocytidyl-2-C-methyl-D-erythritol kinase (319 aa).

Residue lysine 18 is part of the active site. ATP is bound at residue 103-113 (PIGAGLAGGST). Residue aspartate 145 is part of the active site.

Belongs to the GHMP kinase family. IspE subfamily.

It carries out the reaction 4-CDP-2-C-methyl-D-erythritol + ATP = 4-CDP-2-C-methyl-D-erythritol 2-phosphate + ADP + H(+). It participates in isoprenoid biosynthesis; isopentenyl diphosphate biosynthesis via DXP pathway; isopentenyl diphosphate from 1-deoxy-D-xylulose 5-phosphate: step 3/6. Functionally, catalyzes the phosphorylation of the position 2 hydroxy group of 4-diphosphocytidyl-2C-methyl-D-erythritol. This Prochlorococcus marinus (strain NATL1A) protein is 4-diphosphocytidyl-2-C-methyl-D-erythritol kinase.